The primary structure comprises 458 residues: Phosphoglucosamine mutase (458 aa).

Residue Ser-108 is the Phosphoserine intermediate of the active site. Mg(2+) is bound by residues Ser-108, Asp-247, Asp-249, and Asp-251. A Phosphoserine modification is found at Ser-108.

The protein belongs to the phosphohexose mutase family. Mg(2+) is required as a cofactor. Activated by phosphorylation.

The enzyme catalyses alpha-D-glucosamine 1-phosphate = D-glucosamine 6-phosphate. In terms of biological role, catalyzes the conversion of glucosamine-6-phosphate to glucosamine-1-phosphate. This is Phosphoglucosamine mutase from Thiobacillus denitrificans (strain ATCC 25259 / T1).